The following is a 219-amino-acid chain: MTESRIDFRRAKFLISAPDIAHLDQYLPGDVGVEIAFAGRSNAGKSSALNALTEQKSLARTSKTPGRTQLINVFELDAQRRLVDLPGYGFAQVPLALKNKWQQALGEYLQKRACLSGVVVLMDIRHPLKDLDMQMIEWAVASEIPVLALLTKSDKLAQSAKMKTVNEVRLALSEFGDWVQVEPFSSLKGTGKPKVLAILNEWCHPQWLTDELDAANNAE.

One can recognise an EngB-type G domain in the interval 31–205 (VGVEIAFAGR…LAILNEWCHP (175 aa)). GTP contacts are provided by residues 39-46 (GRSNAGKS), 66-70 (GRTQL), 84-87 (DLPG), 151-154 (TKSD), and 184-186 (FSS). Residues Ser46 and Thr68 each coordinate Mg(2+).

Belongs to the TRAFAC class TrmE-Era-EngA-EngB-Septin-like GTPase superfamily. EngB GTPase family. Mg(2+) is required as a cofactor.

Functionally, necessary for normal cell division and for the maintenance of normal septation. The chain is Probable GTP-binding protein EngB from Shewanella baltica (strain OS223).